An 890-amino-acid polypeptide reads, in one-letter code: Protein FAM171A1 (890 aa).

The signal sequence occupies residues 1–21; it reads MSRSATLLLCLLGCHVWKAVT. Residues 22–303 are Extracellular-facing; it reads KTLREPGAGA…VTQDITTYHT (282 aa). N-linked (GlcNAc...) asparagine glycosylation is found at Asn-159, Asn-190, and Asn-194. Residues 304–324 traverse the membrane as a helical segment; it reads VFLLAILGGMAFILLVLLCLL. Residues 325-890 lie on the Cytoplasmic side of the membrane; the sequence is LYYCRRKCLK…ERPLMAFNIK (566 aa). Ser-358, Ser-360, Ser-371, Ser-422, Ser-443, and Ser-525 each carry phosphoserine. Disordered stretches follow at residues 730–759 and 818–890; these read AGRN…RGDA and EGSS…FNIK. Over residues 747–757 the composition is skewed to basic and acidic residues; it reads NEPKSARKGRG. Residues 822 to 833 are compositionally biased toward polar residues; sequence RRSGGQLPSLQE. Phosphoserine is present on residues Ser-849 and Ser-855. The segment covering 858–869 has biased composition (acidic residues); that stretch reads EEEEDDDDDDQG. Positions 870–883 are enriched in basic and acidic residues; that stretch reads EDKKSPWQKREERP.

Belongs to the FAM171 family. As to quaternary structure, interacts with ADAM10, NSG1 and OAZ1. In terms of tissue distribution, expressed in heart, brain, liver, skeletal muscle, kidney and pancreas. In brain, expressed by glia, pyramidal neurons and astrocytes (at protein level). Highly expressed in placental trophoblasts.

The protein resides in the cell membrane. Involved in the regulation of the cytoskeletal dynamics, plays a role in actin stress fiber formation. This is Protein FAM171A1 from Homo sapiens (Human).